Consider the following 104-residue polypeptide: Flagellar hook-basal body complex protein FliE (104 aa).

It belongs to the FliE family.

It localises to the bacterial flagellum basal body. This is Flagellar hook-basal body complex protein FliE from Edwardsiella ictaluri (strain 93-146).